Reading from the N-terminus, the 413-residue chain is Heparan-sulfate 6-O-sulfotransferase 1-A (413 aa).

Residues methionine 9 to lysine 15 lie on the Cytoplasmic side of the membrane. The chain crosses the membrane as a helical; Signal-anchor for type II membrane protein span at residues phenylalanine 16–proline 36. The Lumenal segment spans residues glycine 37–tryptophan 413. A 3'-phosphoadenylyl sulfate-binding site is contributed by histidine 92 to threonine 100. Residues lysine 122 to lysine 123, arginine 139, tryptophan 144, and histidine 149 each bind substrate. The active-site Proton acceptor is histidine 149. 3'-phosphoadenylyl sulfate contacts are provided by arginine 183 and serine 191. Residues histidine 195 and tryptophan 202 each coordinate substrate. The N-linked (GlcNAc...) asparagine glycan is linked to asparagine 262. Methionine 315–tyrosine 317 lines the 3'-phosphoadenylyl sulfate pocket. N-linked (GlcNAc...) asparagine glycosylation occurs at asparagine 318. Arginine 321–alanine 322 serves as a coordination point for 3'-phosphoadenylyl sulfate. N-linked (GlcNAc...) asparagine glycosylation occurs at asparagine 329. The tract at residues proline 374–proline 401 is disordered.

Belongs to the sulfotransferase 6 family. As to expression, during somitogenesis, first expressed in polster and presumptive forebrain. During mid-somitogenesis, expressed in eye, hindbrain and anterior spinal cord. During late somitogenesis, strong expression in eye and hindbrain, decreased levels in midbrain and anterior spinal cord. At 24 hours post-fertilization (hpf), expressed in neural retina and lens, brain and anterior spinal cord. At 36 hpf, retinal expression is confined to the ciliary marginal zone and there is strong expression in tectum, rhombomeres and otic vesicle. At 48 hpf, expressed in retinal ganglion cells and in tectum, rhombomeres and pectoral fin. Not detected in the vasculature during embryogenesis.

Its subcellular location is the membrane. It catalyses the reaction alpha-D-glucosaminyl-[heparan sulfate](n) + 3'-phosphoadenylyl sulfate = 6-sulfo-alpha-D-glucosaminyl-[heparan sulfate](n) + adenosine 3',5'-bisphosphate + H(+). 6-O-sulfation enzyme which catalyzes the transfer of sulfate from 3'-phosphoadenosine 5'-phosphosulfate (PAPS) to position 6 of the N-sulfoglucosamine residue (GlcNS) of heparan sulfate. In Danio rerio (Zebrafish), this protein is Heparan-sulfate 6-O-sulfotransferase 1-A.